A 450-amino-acid polypeptide reads, in one-letter code: MSKYVDRVIAEVEKKYADEPEFVQTVEEVLSSLGPVVDAHPEYEEVALLERMVIPERVIEFRVPWEDDNGKVHVNTGYRVQFNGAIGPYKGGLRFAPSVNLSIMKFLGFEQAFKDSLTTLPMGGAKGGSDFDPNGKSDREVMRFCQAFMTELYRHIGPDIDVPAGDLGVGAREIGYMYGQYRKIVGGFYNGVLTGKARSFGGSLVRPEATGYGSVYYVEAVMKHENDTLVGKTVALAGFGNVAWGAAKKLAELGAKAVTLSGPDGYIYDPEGITTEEKINYMLEMRASGRNKVQDYADKFGVQFFPGEKPWGQKVDIIMPCATQNDVDLEQAKKIVANNVKYYIEVANMPTTNEALRFLMQQPNMVVAPSKAVNAGGVLVSGFEMSQNSERLSWTAEEVDSKLHQVMTDIHDGSAAAAERYGLGYNLVAGANIVGFQKIADAMMAQGIAW.

Positions 90, 111, and 114 each coordinate substrate. Lys-126 serves as the catalytic Proton donor. Substrate is bound at residue Gly-165. Thr-210 and Asn-241 together coordinate NAD(+). Position 381 (Ser-381) interacts with substrate.

The protein belongs to the Glu/Leu/Phe/Val dehydrogenases family. As to quaternary structure, homohexamer.

It catalyses the reaction L-glutamate + NAD(+) + H2O = 2-oxoglutarate + NH4(+) + NADH + H(+). The protein operates within amino-acid degradation; L-glutamate degradation via hydroxyglutarate pathway; crotonoyl-CoA from L-glutamate: step 1/5. This is NAD-specific glutamate dehydrogenase (gdh) from Clostridium symbiosum (Bacteroides symbiosus).